The primary structure comprises 278 residues: MVPGYTEETVLEVHHWTDKLFTLKTTRSPSFRFANGQFCMMGLVVAGKPLVRAYSLASANHEETLEFFSIKVPNGPLTSRLQHIAVGETILVGKRATGTLTIGNLRPGRTLWLLATGTGLAPFLSVVKDPETYERFERVVITHTCRRVQDLAYARYLEHELAADELLGEIVRPKLRYYPSVTREAFKTEGRITALLESGRIFADLALPALDPAHDRLMLCGSSEMLADTAALLEARGFEEGNSGEPGDYLVEKAFAGEKRSPLASASPAESTNLSGPA.

The region spanning 3-103 is the FAD-binding FR-type domain; that stretch reads PGYTEETVLE…KRATGTLTIG (101 aa). Residues 52-55 and Thr-118 contribute to the FAD site; that span reads RAYS.

Belongs to the ferredoxin--NADP reductase type 1 family. Requires FAD as cofactor.

The enzyme catalyses 2 reduced [4Fe-4S]-[ferredoxin] + NADP(+) + H(+) = 2 oxidized [4Fe-4S]-[ferredoxin] + NADPH. Its function is as follows. Transports electrons between NADPH and ferredoxin. Can transfer electrons to ferredoxins Fdx2 and Fdx8. Prefers NADPH to NADH. The chain is Ferredoxin--NADP reductase A from Sorangium cellulosum (strain So ce56) (Polyangium cellulosum (strain So ce56)).